We begin with the raw amino-acid sequence, 331 residues long: C4-dicarboxylate-binding periplasmic protein DctP (331 aa).

The signal sequence occupies residues methionine 1–alanine 23.

It belongs to the bacterial solute-binding protein 7 family. As to quaternary structure, the complex comprises the extracytoplasmic solute receptor protein DctP, and the two transmembrane proteins DctQ and DctM.

It localises to the periplasm. Functionally, part of the tripartite ATP-independent periplasmic (TRAP) transport system DctPQM involved in C4-dicarboxylates uptake. The polypeptide is C4-dicarboxylate-binding periplasmic protein DctP (Pseudomonas aeruginosa (strain ATCC 15692 / DSM 22644 / CIP 104116 / JCM 14847 / LMG 12228 / 1C / PRS 101 / PAO1)).